The sequence spans 258 residues: Regulatory protein RecX (258 aa).

Belongs to the RecX family.

It is found in the cytoplasm. Modulates RecA activity. The polypeptide is Regulatory protein RecX (Streptococcus gordonii (strain Challis / ATCC 35105 / BCRC 15272 / CH1 / DL1 / V288)).